An 895-amino-acid polypeptide reads, in one-letter code: uncharacterized protein (895 aa).

Position 2–19 (2–19) interacts with NAD(+); the sequence is NISVIGTGYVGLIQAVGL. The active site involves cysteine 261. Residues 468 to 614 enclose the DOD-type homing endonuclease domain; sequence LIGYYLSEGW…LLILLQLLGI (147 aa).

It belongs to the UDP-glucose/GDP-mannose dehydrogenase family. This protein undergoes a protein self splicing that involves a post-translational excision of the intervening region (intein) followed by peptide ligation.

This is an uncharacterized protein from Methanocaldococcus jannaschii (strain ATCC 43067 / DSM 2661 / JAL-1 / JCM 10045 / NBRC 100440) (Methanococcus jannaschii).